The chain runs to 331 residues: F-box protein At2g26160 (331 aa).

Residues 4 to 52 enclose the F-box domain; it reads PEWSELPGDLINLTANRFSSISDVLRVRSICKPWRSAAATPKSFQCNLP.

The polypeptide is F-box protein At2g26160 (Arabidopsis thaliana (Mouse-ear cress)).